We begin with the raw amino-acid sequence, 513 residues long: Putative thymidine phosphorylase (513 aa).

The protein belongs to the thymidine/pyrimidine-nucleoside phosphorylase family. Type 2 subfamily.

It catalyses the reaction thymidine + phosphate = 2-deoxy-alpha-D-ribose 1-phosphate + thymine. The sequence is that of Putative thymidine phosphorylase from Bradyrhizobium diazoefficiens (strain JCM 10833 / BCRC 13528 / IAM 13628 / NBRC 14792 / USDA 110).